We begin with the raw amino-acid sequence, 252 residues long: 7-carboxy-7-deazaguanine synthase (252 aa).

Substrate is bound by residues 22–24 (LQG) and Arg-37. The Radical SAM core domain occupies 28-251 (FVGEPQAFVR…QVHKLVDFIP (224 aa)). [4Fe-4S] cluster-binding residues include Cys-41, Cys-45, and Cys-48. Thr-102 is a substrate binding site. Gly-104 provides a ligand contact to S-adenosyl-L-methionine.

This sequence belongs to the radical SAM superfamily. 7-carboxy-7-deazaguanine synthase family. In terms of assembly, homodimer. [4Fe-4S] cluster serves as cofactor. Requires S-adenosyl-L-methionine as cofactor. The cofactor is Mg(2+).

It catalyses the reaction 6-carboxy-5,6,7,8-tetrahydropterin + H(+) = 7-carboxy-7-deazaguanine + NH4(+). It functions in the pathway purine metabolism; 7-cyano-7-deazaguanine biosynthesis. Functionally, catalyzes the complex heterocyclic radical-mediated conversion of 6-carboxy-5,6,7,8-tetrahydropterin (CPH4) to 7-carboxy-7-deazaguanine (CDG), a step common to the biosynthetic pathways of all 7-deazapurine-containing compounds. This is 7-carboxy-7-deazaguanine synthase from Methanopyrus kandleri (strain AV19 / DSM 6324 / JCM 9639 / NBRC 100938).